A 244-amino-acid polypeptide reads, in one-letter code: CTD nuclear envelope phosphatase 1 (244 aa).

Residues L7–R29 traverse the membrane as a helical segment. Residues S57–L224 enclose the FCP1 homology domain.

The protein belongs to the dullard family. In terms of assembly, interacts with bmpr1a, bmpr1b and bmpr2.

The protein localises to the membrane. The protein resides in the cytoplasm. Its subcellular location is the perinuclear region. The catalysed reaction is O-phospho-L-seryl-[protein] + H2O = L-seryl-[protein] + phosphate. It carries out the reaction O-phospho-L-threonyl-[protein] + H2O = L-threonyl-[protein] + phosphate. Serine/threonine protein phosphatase that may dephosphorylate and activate lipins. Lipins are phosphatidate phosphatases that catalyze the conversion of phosphatidic acid to diacylglycerol and control the metabolism of fatty acids at different levels. May indirectly modulate the lipid composition of nuclear and/or endoplasmic reticulum membranes and be required for proper nuclear membrane morphology and/or dynamics. May also indirectly regulate the production of lipid droplets and triacylglycerol. Induces neuronal differentiation by antagonizing BMP signaling. Acts both by dephosphorylating BMPR1A and by promoting BMPR2 proteasomal degradation. The sequence is that of CTD nuclear envelope phosphatase 1 (ctdnep1) from Xenopus tropicalis (Western clawed frog).